Here is a 967-residue protein sequence, read N- to C-terminus: Regulator of G-protein signaling 3 (967 aa).

A PDZ domain is found at 18-95; sequence QITIRRGKDG…EIILLVWRVV (78 aa). A disordered region spans residues 115 to 135; that stretch reads THDLLSPPNKREKNCTHGAPT. The residue at position 167 (Arg167) is an Omega-N-methylarginine. Positions 389-705 are disordered; the sequence is QLAATPTERK…EGGLSLRVQN (317 aa). Polar residues-rich tracts occupy residues 476–486, 512–549, and 577–597; these read LPSSKNPSPSQ, SPSSEDIATCQNPPQSPETSTSKDSPPGQGSSPTTEVP, and SSASDQNVLPSQESPPSQGSL. Positions 650–676 are enriched in acidic residues; the sequence is GEDEDAEEGEEGEEGEEDEEDDTNDDN. The segment covering 677–687 has biased composition (basic and acidic residues); that stretch reads YGDRNEAKRSS. Phosphoserine is present on residues Ser713, Ser716, Ser748, and Ser777. The segment at 807–830 is disordered; sequence FRRRNESPGAQPAGKADKTTKSFK. Residues 821 to 830 are compositionally biased toward basic and acidic residues; the sequence is KADKTTKSFK. The RGS domain occupies 842 to 967; sequence SLEKLLLHKY…INQKKMSPPL (126 aa).

As to quaternary structure, binds EFNB1 and EFNB2. Binds the GNB1-GNG2 heterodimer. Binds ESR1. Post-translationally, phosphorylated by cyclic GMP-dependent protein kinase. ISGylated. Detected in kidney, uterus, ovary, heart, brain, spleen, lung and testis.

The protein resides in the cytoplasm. It is found in the membrane. The protein localises to the nucleus. Down-regulates signaling from heterotrimeric G-proteins by increasing the GTPase activity of the alpha subunits, thereby driving them into their inactive GDP-bound form. Down-regulates G-protein-mediated release of inositol phosphates and activation of MAP kinases. This chain is Regulator of G-protein signaling 3 (Rgs3), found in Rattus norvegicus (Rat).